Here is a 192-residue protein sequence, read N- to C-terminus: MSTIKSGDIDKGSFLLFKGMPHIVLEREFSKMGRGGSIVRLKLKNLKNKSVIKETLKGSDTVEEIEVLEVNSQYLYKDNESLIFMDLETYDQFSVNLRDVVNLEDKVLFLQEAEVYSLIKWGNEVIDLKLPPKVAFEVIDAEIAVKGDTVTNAMKNVTLHTGLVVKAPLFINIGDKILVNSETKEYAERVKV.

It belongs to the elongation factor P family.

The protein localises to the cytoplasm. The protein operates within protein biosynthesis; polypeptide chain elongation. In terms of biological role, involved in peptide bond synthesis. Stimulates efficient translation and peptide-bond synthesis on native or reconstituted 70S ribosomes in vitro. Probably functions indirectly by altering the affinity of the ribosome for aminoacyl-tRNA, thus increasing their reactivity as acceptors for peptidyl transferase. The chain is Elongation factor P from Borrelia duttonii (strain Ly).